The following is a 152-amino-acid chain: Flagellar assembly factor FliW (152 aa).

It belongs to the FliW family. In terms of assembly, interacts with translational regulator CsrA and flagellin(s).

The protein resides in the cytoplasm. Functionally, acts as an anti-CsrA protein, binds CsrA and prevents it from repressing translation of its target genes, one of which is flagellin. Binds to flagellin and participates in the assembly of the flagellum. The sequence is that of Flagellar assembly factor FliW from Desulfitobacterium hafniense (strain DSM 10664 / DCB-2).